An 82-amino-acid chain; its full sequence is UPF0180 protein BALH_1248 (82 aa).

This sequence belongs to the UPF0180 family.

This Bacillus thuringiensis (strain Al Hakam) protein is UPF0180 protein BALH_1248.